Reading from the N-terminus, the 153-residue chain is Ribosomal RNA large subunit methyltransferase H (153 aa).

Residues leucine 70, glycine 102, and 121 to 126 each bind S-adenosyl-L-methionine; that span reads LSSMTF.

The protein belongs to the RNA methyltransferase RlmH family. Homodimer.

Its subcellular location is the cytoplasm. It carries out the reaction pseudouridine(1915) in 23S rRNA + S-adenosyl-L-methionine = N(3)-methylpseudouridine(1915) in 23S rRNA + S-adenosyl-L-homocysteine + H(+). Specifically methylates the pseudouridine at position 1915 (m3Psi1915) in 23S rRNA. This chain is Ribosomal RNA large subunit methyltransferase H, found in Dictyoglomus thermophilum (strain ATCC 35947 / DSM 3960 / H-6-12).